The chain runs to 97 residues: Large ribosomal subunit protein uL23 (97 aa).

The protein belongs to the universal ribosomal protein uL23 family. Part of the 50S ribosomal subunit. Contacts protein L29, and trigger factor when it is bound to the ribosome.

In terms of biological role, one of the early assembly proteins it binds 23S rRNA. One of the proteins that surrounds the polypeptide exit tunnel on the outside of the ribosome. Forms the main docking site for trigger factor binding to the ribosome. The chain is Large ribosomal subunit protein uL23 from Brucella abortus (strain S19).